The chain runs to 283 residues: MNKKRLLFRTPLDALFLLFGTALSACSSTATNVISSLSSAQKYFDAHKSELIKKNVINLLKEGYSTDSKATVNSLFAGWKYTLMDQKILERNLDASRFTKAFGTNKGKDDVIPSISEKGLFLDETYSGVSQQIAKVLGVQSQKVTGFSYSWSSTTNFKVVISFMMQGIVGSGEESNSLIKSFLSSGNNGNVTENDFNNGNANFDGTFIFTFTPPTDGRRFAFSNFDPITGTINFPANLQIDASTTHEKLNILMQNNEHVKKIKSRSFTGKSFDLLPFYFYALL.

Positions 1–25 (MNKKRLLFRTPLDALFLLFGTALSA) are cleaved as a signal peptide. C26 is lipidated: N-palmitoyl cysteine. The S-diacylglycerol cysteine moiety is linked to residue C26.

It belongs to the MG439/MG440 family.

The protein resides in the cell membrane. This is an uncharacterized protein from Mycoplasma pneumoniae (strain ATCC 29342 / M129 / Subtype 1) (Mycoplasmoides pneumoniae).